We begin with the raw amino-acid sequence, 359 residues long: Ferredoxin--NADP reductase (359 aa).

Residues Asp48, Gln56, Tyr61, Ala101, Phe139, Asp304, and Ser345 each contribute to the FAD site.

This sequence belongs to the ferredoxin--NADP reductase type 2 family. As to quaternary structure, homodimer. FAD serves as cofactor.

The catalysed reaction is 2 reduced [2Fe-2S]-[ferredoxin] + NADP(+) + H(+) = 2 oxidized [2Fe-2S]-[ferredoxin] + NADPH. The sequence is that of Ferredoxin--NADP reductase from Ralstonia pickettii (strain 12J).